A 378-amino-acid polypeptide reads, in one-letter code: Ribosomal RNA large subunit methyltransferase G (378 aa).

It belongs to the methyltransferase superfamily. RlmG family.

The protein localises to the cytoplasm. It catalyses the reaction guanosine(1835) in 23S rRNA + S-adenosyl-L-methionine = N(2)-methylguanosine(1835) in 23S rRNA + S-adenosyl-L-homocysteine + H(+). Functionally, specifically methylates the guanine in position 1835 (m2G1835) of 23S rRNA. In Shigella boydii serotype 18 (strain CDC 3083-94 / BS512), this protein is Ribosomal RNA large subunit methyltransferase G.